The primary structure comprises 210 residues: HTH-type transcriptional repressor FabR (210 aa).

Positions 10-70 (KTRRSLVEAA…TMVDESGLML (61 aa)) constitute an HTH tetR-type domain. The segment at residues 33 to 52 (SLREVAREAGIAPTSFYRHF) is a DNA-binding region (H-T-H motif).

In terms of assembly, homodimer.

It localises to the cytoplasm. In terms of biological role, represses the transcription of fabB, involved in unsaturated fatty acid (UFA) biosynthesis. By controlling UFA production, FabR directly influences the physical properties of the membrane bilayer. The polypeptide is HTH-type transcriptional repressor FabR (Salmonella choleraesuis (strain SC-B67)).